A 74-amino-acid polypeptide reads, in one-letter code: ATP synthase subunit c (74 aa).

A run of 2 helical transmembrane segments spans residues 8–28 (FIGV…VSNI) and 52–72 (IGAG…MLLI).

It belongs to the ATPase C chain family. F-type ATPases have 2 components, F(1) - the catalytic core - and F(0) - the membrane proton channel. F(1) has five subunits: alpha(3), beta(3), gamma(1), delta(1), epsilon(1). F(0) has three main subunits: a(1), b(2) and c(10-14). The alpha and beta chains form an alternating ring which encloses part of the gamma chain. F(1) is attached to F(0) by a central stalk formed by the gamma and epsilon chains, while a peripheral stalk is formed by the delta and b chains.

Its subcellular location is the cell inner membrane. Functionally, f(1)F(0) ATP synthase produces ATP from ADP in the presence of a proton or sodium gradient. F-type ATPases consist of two structural domains, F(1) containing the extramembraneous catalytic core and F(0) containing the membrane proton channel, linked together by a central stalk and a peripheral stalk. During catalysis, ATP synthesis in the catalytic domain of F(1) is coupled via a rotary mechanism of the central stalk subunits to proton translocation. Key component of the F(0) channel; it plays a direct role in translocation across the membrane. A homomeric c-ring of between 10-14 subunits forms the central stalk rotor element with the F(1) delta and epsilon subunits. This Rickettsia canadensis (strain McKiel) protein is ATP synthase subunit c.